The primary structure comprises 273 residues: Imidazole glycerol phosphate synthase subunit HisF (273 aa).

Catalysis depends on residues D11 and D134.

The protein belongs to the HisA/HisF family. As to quaternary structure, heterodimer of HisH and HisF.

The protein resides in the cytoplasm. It catalyses the reaction 5-[(5-phospho-1-deoxy-D-ribulos-1-ylimino)methylamino]-1-(5-phospho-beta-D-ribosyl)imidazole-4-carboxamide + L-glutamine = D-erythro-1-(imidazol-4-yl)glycerol 3-phosphate + 5-amino-1-(5-phospho-beta-D-ribosyl)imidazole-4-carboxamide + L-glutamate + H(+). It participates in amino-acid biosynthesis; L-histidine biosynthesis; L-histidine from 5-phospho-alpha-D-ribose 1-diphosphate: step 5/9. Functionally, IGPS catalyzes the conversion of PRFAR and glutamine to IGP, AICAR and glutamate. The HisF subunit catalyzes the cyclization activity that produces IGP and AICAR from PRFAR using the ammonia provided by the HisH subunit. This is Imidazole glycerol phosphate synthase subunit HisF from Methanocella arvoryzae (strain DSM 22066 / NBRC 105507 / MRE50).